The following is a 594-amino-acid chain: 4-alpha-glucanotransferase DPE1, chloroplastic/amyloplastic (594 aa).

Residues 1–37 (MATLSLPLPHLTQAIPARARPRPRPLRGIPARLLSCR) constitute a chloroplast transit peptide.

Belongs to the disproportionating enzyme family.

It localises to the plastid. Its subcellular location is the chloroplast. It is found in the amyloplast. It carries out the reaction Transfers a segment of a (1-&gt;4)-alpha-D-glucan to a new position in an acceptor, which may be glucose or a (1-&gt;4)-alpha-D-glucan.. Its function is as follows. Chloroplastic alpha-glucanotransferase involved in maltotriose metabolism. This is 4-alpha-glucanotransferase DPE1, chloroplastic/amyloplastic (DPE1) from Oryza sativa subsp. japonica (Rice).